Here is a 701-residue protein sequence, read N- to C-terminus: ER-retained PMA1-suppressing protein 1 (701 aa).

The N-terminal stretch at 1–27 (MKMNLKRLVVTFFSCITFLLKFTIAAA) is a signal peptide. Positions 28–142 (EPPEGFPEPL…LIAFARRESM (115 aa)) constitute a Thioredoxin 1 domain. Cysteines 60 and 63 form a disulfide. N-linked (GlcNAc...) asparagine glycosylation occurs at Asn-85. Cys-200 and Cys-203 are disulfide-bonded. N-linked (GlcNAc...) asparagine glycans are attached at residues Asn-264, Asn-299, and Asn-370. The Thioredoxin 2 domain occupies 408–446 (PTFFMFKDGDPISYVFPGYSTTEMRNIDAIMDWVKKYSN). A helical transmembrane segment spans residues 646–666 (IIHGNGMPGYLIVIVLFIAIL).

Belongs to the protein disulfide isomerase family. As to quaternary structure, interacts with mutated PMA1-D378N but not wild type PMA1. Interacts with EUG1, KAR2, MPD1 and PDI1.

It is found in the endoplasmic reticulum membrane. It catalyses the reaction Catalyzes the rearrangement of -S-S- bonds in proteins.. In terms of biological role, acts as a membrane-bound chaperone in endoplasmic reticulum quality control. Probably facilitates presentation of substrate to membrane-bound components of the degradation machinery. This is ER-retained PMA1-suppressing protein 1 (EPS1) from Saccharomyces cerevisiae (strain ATCC 204508 / S288c) (Baker's yeast).